A 207-amino-acid polypeptide reads, in one-letter code: MPMRKRHFYRLLPLASLLLAACTIPVSKGPATSPTSPQWRQHEQQLQQLGQFETRGAFAYLSDKQKVYARFFWQQTSPERYRLLLTNPLGSTELELVVQPGVTQLTDNQGKHYVSDDPQEMIQKLTGMSIPLESLRQWILGLPGDTPNFTLDDKYRLKKLTYQQNGVTWVVDYQEYNTQVTPPLPSRLELNQDGQRIKLKMDSWTIK.

The N-terminal stretch at 1-21 (MPMRKRHFYRLLPLASLLLAA) is a signal peptide. A lipid anchor (N-palmitoyl cysteine) is attached at Cys-22. A lipid anchor (S-diacylglycerol cysteine) is attached at Cys-22.

It belongs to the LolB family. Monomer.

The protein localises to the cell outer membrane. Plays a critical role in the incorporation of lipoproteins in the outer membrane after they are released by the LolA protein. This chain is Outer-membrane lipoprotein LolB, found in Yersinia pseudotuberculosis serotype O:3 (strain YPIII).